The chain runs to 168 residues: T-cell surface glycoprotein CD3 delta chain (168 aa).

An N-terminal signal peptide occupies residues 1–21 (MEHSRFLSCLILAALLSQVNP). Residues 22–102 (RILKVLEPED…CVELDTATLA (81 aa)) lie on the Extracellular side of the membrane. Cysteines 37 and 74 form a disulfide. Asn38 and Asn56 each carry an N-linked (GlcNAc...) asparagine glycan. A helical transmembrane segment spans residues 103-123 (GMIITDIIATVLLALGVYCFA). Residues 124–168 (GHETGRFSRAADTQALMGNDQLYQPLRERNDAQYSRLGDKWARNK) lie on the Cytoplasmic side of the membrane. An ITAM domain is found at 135–163 (DTQALMGNDQLYQPLRERNDAQYSRLGDK). 2 positions are modified to phosphotyrosine: Tyr146 and Tyr157.

As to quaternary structure, the TCR-CD3 complex is composed of a CD3D/CD3E and a CD3G/CD3E heterodimers that preferentially associate with TCRalpha and TCRbeta, respectively, to form TCRalpha/CD3E/CD3G and TCRbeta/CD3G/CD3E trimers. In turn, the hexamer interacts with CD3Z homodimer to form the TCR-CD3 complex. Alternatively, TCRalpha and TCRbeta can be replaced by TCRgamma and TCRdelta. Interacts with coreceptors CD4 and CD8. Post-translationally, phosphorylated on Tyr residues after T-cell receptor triggering by LCK in association with CD4/CD8. As to expression, CD3D is mostly present on T-lymphocytes with its TCR-CD3 partners. Present also in fetal NK-cells.

The protein resides in the cell membrane. In terms of biological role, part of the TCR-CD3 complex present on T-lymphocyte cell surface that plays an essential role in adaptive immune response. When antigen presenting cells (APCs) activate T-cell receptor (TCR), TCR-mediated signals are transmitted across the cell membrane by the CD3 chains CD3D, CD3E, CD3G and CD3Z. All CD3 chains contain immunoreceptor tyrosine-based activation motifs (ITAMs) in their cytoplasmic domain. Upon TCR engagement, these motifs become phosphorylated by Src family protein tyrosine kinases LCK and FYN, resulting in the activation of downstream signaling pathways. In addition of this role of signal transduction in T-cell activation, CD3D plays an essential role in thymocyte differentiation. Indeed, participates in correct intracellular TCR-CD3 complex assembly and surface expression. In absence of a functional TCR-CD3 complex, thymocytes are unable to differentiate properly. Interacts with CD4 and CD8 and thus serves to establish a functional link between the TCR and coreceptors CD4 and CD8, which is needed for activation and positive selection of CD4 or CD8 T-cells. The sequence is that of T-cell surface glycoprotein CD3 delta chain (CD3D) from Bos taurus (Bovine).